A 204-amino-acid polypeptide reads, in one-letter code: Fluoride-specific ion channel FluC 3 (204 aa).

Residues 1–16 (MRADESGPERESREPT) are compositionally biased toward basic and acidic residues. Residues 1–53 (MRADESGPERESREPTHIPGAEPELGGEPTPRGEPGPGFEPGPGGEPAPSRAP) are disordered. Positions 32–46 (RGEPGPGFEPGPGGE) are enriched in pro residues. 4 helical membrane-spanning segments follow: residues 62–82 (VLAA…ALGL), 96–116 (FAVN…VLEI), 125–145 (PFAA…MVDT), and 158–178 (AFNV…GLAI). Na(+)-binding residues include Gly-133 and Thr-136.

The protein belongs to the fluoride channel Fluc/FEX (TC 1.A.43) family.

The protein localises to the cell membrane. It catalyses the reaction fluoride(in) = fluoride(out). With respect to regulation, na(+) is not transported, but it plays an essential structural role and its presence is essential for fluoride channel function. Its function is as follows. Fluoride-specific ion channel. Important for reducing fluoride concentration in the cell, thus reducing its toxicity. This chain is Fluoride-specific ion channel FluC 3, found in Streptomyces avermitilis (strain ATCC 31267 / DSM 46492 / JCM 5070 / NBRC 14893 / NCIMB 12804 / NRRL 8165 / MA-4680).